A 335-amino-acid chain; its full sequence is Ig gamma-2A chain C region secreted form (335 aa).

Ig-like domains are found at residues Pro6 to Glu98, Pro126 to Ser225, and Pro234 to Ser330. Asn185 carries an N-linked (GlcNAc...) asparagine glycan.

Its subcellular location is the secreted. This chain is Ig gamma-2A chain C region secreted form, found in Mus musculus (Mouse).